Consider the following 379-residue polypeptide: Chaperone protein DnaJ (379 aa).

Residues 5-69 (EFYDRLGVSK…QKRAAYDQYG (65 aa)) enclose the J domain. Residues 135 to 217 (GAEKEVSYNR…CHGTGHEKKT (83 aa)) form a CR-type zinc finger. The Zn(2+) site is built by cysteine 148, cysteine 151, cysteine 165, cysteine 168, cysteine 191, cysteine 194, cysteine 205, and cysteine 208. CXXCXGXG motif repeat units follow at residues 148–155 (CHTCSGSG), 165–172 (CQKCHGSG), 191–198 (CDVCQGSG), and 205–212 (CPTCHGTG).

Belongs to the DnaJ family. As to quaternary structure, homodimer. The cofactor is Zn(2+).

The protein resides in the cytoplasm. Its function is as follows. Participates actively in the response to hyperosmotic and heat shock by preventing the aggregation of stress-denatured proteins and by disaggregating proteins, also in an autonomous, DnaK-independent fashion. Unfolded proteins bind initially to DnaJ; upon interaction with the DnaJ-bound protein, DnaK hydrolyzes its bound ATP, resulting in the formation of a stable complex. GrpE releases ADP from DnaK; ATP binding to DnaK triggers the release of the substrate protein, thus completing the reaction cycle. Several rounds of ATP-dependent interactions between DnaJ, DnaK and GrpE are required for fully efficient folding. Also involved, together with DnaK and GrpE, in the DNA replication of plasmids through activation of initiation proteins. The protein is Chaperone protein DnaJ of Streptococcus agalactiae serotype V (strain ATCC BAA-611 / 2603 V/R).